Here is a 211-residue protein sequence, read N- to C-terminus: Imidazole glycerol phosphate synthase subunit HisH (211 aa).

In terms of domain architecture, Glutamine amidotransferase type-1 spans threonine 4–isoleucine 211. Cysteine 82 functions as the Nucleophile in the catalytic mechanism. Residues histidine 192 and glutamate 194 contribute to the active site.

As to quaternary structure, heterodimer of HisH and HisF.

Its subcellular location is the cytoplasm. The enzyme catalyses 5-[(5-phospho-1-deoxy-D-ribulos-1-ylimino)methylamino]-1-(5-phospho-beta-D-ribosyl)imidazole-4-carboxamide + L-glutamine = D-erythro-1-(imidazol-4-yl)glycerol 3-phosphate + 5-amino-1-(5-phospho-beta-D-ribosyl)imidazole-4-carboxamide + L-glutamate + H(+). It carries out the reaction L-glutamine + H2O = L-glutamate + NH4(+). It functions in the pathway amino-acid biosynthesis; L-histidine biosynthesis; L-histidine from 5-phospho-alpha-D-ribose 1-diphosphate: step 5/9. Functionally, IGPS catalyzes the conversion of PRFAR and glutamine to IGP, AICAR and glutamate. The HisH subunit catalyzes the hydrolysis of glutamine to glutamate and ammonia as part of the synthesis of IGP and AICAR. The resulting ammonia molecule is channeled to the active site of HisF. This Corynebacterium efficiens (strain DSM 44549 / YS-314 / AJ 12310 / JCM 11189 / NBRC 100395) protein is Imidazole glycerol phosphate synthase subunit HisH.